The primary structure comprises 626 residues: Acetolactate synthase large subunit (626 aa).

Over residues 1–13 (MNVAASQQPTPAT) the composition is skewed to polar residues. Residues 1–23 (MNVAASQQPTPATVASRGRSAAP) are disordered. A thiamine diphosphate-binding site is contributed by glutamate 73. Residues arginine 175, 281–302 (HGTVSAVGALQRSDLLIAIGSR), and 324–343 (DIDPAEIGKIKQVEVPIVGD) contribute to the FAD site. The tract at residues 416-496 (QHQMWAAQFV…IKIALINNGN (81 aa)) is thiamine pyrophosphate binding. Aspartate 467 and asparagine 494 together coordinate Mg(2+).

It belongs to the TPP enzyme family. In terms of assembly, dimer of large and small chains. Mg(2+) serves as cofactor. The cofactor is thiamine diphosphate.

It catalyses the reaction 2 pyruvate + H(+) = (2S)-2-acetolactate + CO2. Its pathway is amino-acid biosynthesis; L-isoleucine biosynthesis; L-isoleucine from 2-oxobutanoate: step 1/4. It participates in amino-acid biosynthesis; L-valine biosynthesis; L-valine from pyruvate: step 1/4. The sequence is that of Acetolactate synthase large subunit (ilvB) from Corynebacterium glutamicum (strain ATCC 13032 / DSM 20300 / JCM 1318 / BCRC 11384 / CCUG 27702 / LMG 3730 / NBRC 12168 / NCIMB 10025 / NRRL B-2784 / 534).